The chain runs to 289 residues: ATP synthase subunit a (289 aa).

6 helical membrane-spanning segments follow: residues Ala-43–Phe-63, Ser-101–Val-121, Leu-160–Ile-180, Leu-193–Ala-213, Val-232–Val-252, and Ala-259–Val-279.

The protein belongs to the ATPase A chain family. In terms of assembly, F-type ATPases have 2 components, CF(1) - the catalytic core - and CF(0) - the membrane proton channel. CF(1) has five subunits: alpha(3), beta(3), gamma(1), delta(1), epsilon(1). CF(0) has three main subunits: a(1), b(2) and c(9-12). The alpha and beta chains form an alternating ring which encloses part of the gamma chain. CF(1) is attached to CF(0) by a central stalk formed by the gamma and epsilon chains, while a peripheral stalk is formed by the delta and b chains.

The protein localises to the cell inner membrane. Key component of the proton channel; it plays a direct role in the translocation of protons across the membrane. In Pseudomonas syringae pv. syringae (strain B728a), this protein is ATP synthase subunit a.